The following is a 313-amino-acid chain: tRNA pseudouridine synthase B (313 aa).

His-44 provides a ligand contact to substrate. Residue Asp-49 is the Nucleophile of the active site. 3 residues coordinate substrate: Tyr-77, Tyr-180, and Leu-201.

The protein belongs to the pseudouridine synthase TruB family. Type 1 subfamily.

It catalyses the reaction uridine(55) in tRNA = pseudouridine(55) in tRNA. In terms of biological role, responsible for synthesis of pseudouridine from uracil-55 in the psi GC loop of transfer RNAs. This is tRNA pseudouridine synthase B from Hamiltonella defensa subsp. Acyrthosiphon pisum (strain 5AT).